The sequence spans 415 residues: Serine hydroxymethyltransferase (415 aa).

Residues leucine 119 and 123–125 (GHL) contribute to the (6S)-5,6,7,8-tetrahydrofolate site. Residue lysine 228 is modified to N6-(pyridoxal phosphate)lysine. 353 to 355 (SAF) contributes to the (6S)-5,6,7,8-tetrahydrofolate binding site.

Belongs to the SHMT family. Homodimer. Requires pyridoxal 5'-phosphate as cofactor.

The protein resides in the cytoplasm. It carries out the reaction (6R)-5,10-methylene-5,6,7,8-tetrahydrofolate + glycine + H2O = (6S)-5,6,7,8-tetrahydrofolate + L-serine. Its pathway is one-carbon metabolism; tetrahydrofolate interconversion. It participates in amino-acid biosynthesis; glycine biosynthesis; glycine from L-serine: step 1/1. Catalyzes the reversible interconversion of serine and glycine with tetrahydrofolate (THF) serving as the one-carbon carrier. Also exhibits THF-independent aldolase activity toward beta-hydroxyamino acids, producing glycine and aldehydes, via a retro-aldol mechanism. The polypeptide is Serine hydroxymethyltransferase (Haloarcula marismortui (strain ATCC 43049 / DSM 3752 / JCM 8966 / VKM B-1809) (Halobacterium marismortui)).